The chain runs to 59 residues: Putative zinc finger protein ORF59a (59 aa).

A C2H2-type; degenerate zinc finger spans residues 11-33; that stretch reads YQCLRCGLTFRTKKQLIRHLVNT.

This Acidianus hospitalis (AFV-1) protein is Putative zinc finger protein ORF59a.